A 493-amino-acid polypeptide reads, in one-letter code: 2-amino-4-deoxychorismate synthase (493 aa).

This sequence belongs to the anthranilate synthase component I family. Mg(2+) is required as a cofactor.

It carries out the reaction (2S)-2-amino-4-deoxychorismate + L-glutamate = chorismate + L-glutamine. Functionally, converts chorismate to 2-amino-4-deoxychorismate (ADIC). Involved in the biosynthesis of the benzoxazolinate moiety of the enediyne antitumor antibiotic C-1027. The polypeptide is 2-amino-4-deoxychorismate synthase (sgcD) (Streptomyces globisporus).